Reading from the N-terminus, the 407-residue chain is Immunoglobulin superfamily member 5 (407 aa).

Over 1–266 (MGQKERSTAD…LGFSLPTWGK (266 aa)) the chain is Extracellular. Ig-like V-type domains lie at 39 to 139 (NEVI…LTVQ) and 142 to 231 (GELF…ATVN). N-linked (GlcNAc...) asparagine glycosylation is found at N59, N103, N210, and N231. Intrachain disulfides connect C60/C123 and C163/C215. Residues 267–285 (VGLGLAGTMLLTPTCTLTI) form a helical membrane-spanning segment. Residues 286-407 (RCCCCRRRCC…PEKVSNTTVV (122 aa)) are Cytoplasmic-facing. Over residues 320-331 (KSEKEKTNKETE) the composition is skewed to basic and acidic residues. The interval 320 to 407 (KSEKEKTNKE…PEKVSNTTVV (88 aa)) is disordered. Over residues 389–407 (PQASFNLASPEKVSNTTVV) the composition is skewed to polar residues.

It belongs to the immunoglobulin superfamily. Interacts with MAGI1 at tight junctions, forms a tripartite complex with NPHS1. Interacts with LNX1 isoform 2 via its PDZ 2 domain, it may also interact with other isoforms containing this domain.

The protein resides in the apical cell membrane. Its subcellular location is the cell junction. The protein localises to the tight junction. Its function is as follows. Provides, together with MAGI1, an adhesion machinery at tight junctions, which may regulate the permeability of kidney glomerulus and small intestinal epithelial cells. Mediates calcium-independent homophilic cell adhesion. In testis, it may function as a cell adhesion molecule rather than a tight-junction protein. It may participate in the adhesion between spermatogonia-spermatogonia, spermatogonia-Sertoli cells, and Sertoli cells-Sertoli cells. The protein is Immunoglobulin superfamily member 5 (IGSF5) of Homo sapiens (Human).